The sequence spans 434 residues: Serine hydroxymethyltransferase (434 aa).

Residues Leu-132 and 136-138 (GHL) contribute to the (6S)-5,6,7,8-tetrahydrofolate site. Lys-241 is subject to N6-(pyridoxal phosphate)lysine.

It belongs to the SHMT family. Homodimer. Pyridoxal 5'-phosphate is required as a cofactor.

Its subcellular location is the cytoplasm. The catalysed reaction is (6R)-5,10-methylene-5,6,7,8-tetrahydrofolate + glycine + H2O = (6S)-5,6,7,8-tetrahydrofolate + L-serine. It participates in one-carbon metabolism; tetrahydrofolate interconversion. Its pathway is amino-acid biosynthesis; glycine biosynthesis; glycine from L-serine: step 1/1. Functionally, catalyzes the reversible interconversion of serine and glycine with tetrahydrofolate (THF) serving as the one-carbon carrier. This reaction serves as the major source of one-carbon groups required for the biosynthesis of purines, thymidylate, methionine, and other important biomolecules. Also exhibits THF-independent aldolase activity toward beta-hydroxyamino acids, producing glycine and aldehydes, via a retro-aldol mechanism. This chain is Serine hydroxymethyltransferase, found in Kineococcus radiotolerans (strain ATCC BAA-149 / DSM 14245 / SRS30216).